A 590-amino-acid polypeptide reads, in one-letter code: Arginine--tRNA ligase, cytoplasmic (590 aa).

Alanine 2 is subject to N-acetylalanine. Residues 137 to 139 (SPN), histidine 148, tyrosine 322, aspartate 326, and glutamine 350 contribute to the L-arginine site. A 'HIGH' region motif is present at residues 138–149 (PNIAKEMHVGHL). Residues 470 to 484 (DTAVYLLYAHARICS) form an interaction with tRNA region.

It belongs to the class-I aminoacyl-tRNA synthetase family.

It localises to the cytoplasm. It is found in the cytosol. The enzyme catalyses tRNA(Arg) + L-arginine + ATP = L-arginyl-tRNA(Arg) + AMP + diphosphate. Its function is as follows. Forms part of a macromolecular complex that catalyzes the attachment of specific amino acids to cognate tRNAs during protein synthesis. This chain is Arginine--tRNA ligase, cytoplasmic, found in Arabidopsis thaliana (Mouse-ear cress).